We begin with the raw amino-acid sequence, 392 residues long: 23S rRNA (uracil(747)-C(5))-methyltransferase RlmC (392 aa).

Residues Cys-4, Cys-12, Cys-15, and Cys-93 each contribute to the [4Fe-4S] cluster site. Positions 218, 247, 275, and 321 each coordinate S-adenosyl-L-methionine. Catalysis depends on Cys-348, which acts as the Nucleophile.

It belongs to the class I-like SAM-binding methyltransferase superfamily. RNA M5U methyltransferase family. RlmC subfamily.

It catalyses the reaction uridine(747) in 23S rRNA + S-adenosyl-L-methionine = 5-methyluridine(747) in 23S rRNA + S-adenosyl-L-homocysteine + H(+). Catalyzes the formation of 5-methyl-uridine at position 747 (m5U747) in 23S rRNA. This chain is 23S rRNA (uracil(747)-C(5))-methyltransferase RlmC, found in Haemophilus influenzae (strain PittGG).